The primary structure comprises 291 residues: MDSPWDELALAFSRTSMFPFFDIAHYLVSVMAVKRQPGAAALAWKNPISSWFTAMLHCFGGGILSCLLLAEPPLKFLANHTNILLASSIWYITFFCPHDLVSQGYSYLPVQLLASGMKEVTRTWKIVGGVTHANSYYKNGWIVMIAIGWARGAGGTIITNFERLVKGDWKPEGDEWLKMSYPAKVTLLGSVIFTFQHTQHLAISKHNLMFLYTIFIVATKITMMTTQTSTMTFAPFEDTLSWMLFGWQQPFSSCEKKSEAKSPSNGVGSLASKPVDVASDNVKKKHTKKNE.

At 1-19 (MDSPWDELALAFSRTSMFP) the chain is on the lumenal side. Residues 20–33 (FFDIAHYLVSVMAV) form a helical membrane-spanning segment. Over 34–50 (KRQPGAAALAWKNPISS) the chain is Cytoplasmic. A helical transmembrane segment spans residues 51-70 (WFTAMLHCFGGGILSCLLLA). Topologically, residues 71-82 (EPPLKFLANHTN) are lumenal. Residues 83–99 (ILLASSIWYITFFCPHD) traverse the membrane as a helical segment. The Cytoplasmic segment spans residues 100–104 (LVSQG). A helical transmembrane segment spans residues 105-121 (YSYLPVQLLASGMKEVT). A 1,2-diacyl-sn-glycero-3-phospho-(1D-myo-inositol-4,5-bisphosphate) is bound by residues lysine 118 and arginine 122. Over 122–139 (RTWKIVGGVTHANSYYKN) the chain is Lumenal. The chain crosses the membrane as a helical span at residues 140–156 (GWIVMIAIGWARGAGGT). Residues 157 to 179 (IITNFERLVKGDWKPEGDEWLKM) are Cytoplasmic-facing. Residues 180–195 (SYPAKVTLLGSVIFTF) form a helical membrane-spanning segment. Topologically, residues 196-207 (QHTQHLAISKHN) are lumenal. A helical transmembrane segment spans residues 208–227 (LMFLYTIFIVATKITMMTTQ). Topologically, residues 228–291 (TSTMTFAPFE…VKKKHTKKNE (64 aa)) are cytoplasmic. Residues 256–291 (KKSEAKSPSNGVGSLASKPVDVASDNVKKKHTKKNE) are disordered. Serine 262 bears the Phosphoserine mark.

Belongs to the TMEM38 family. In terms of assembly, homotrimer; conformation seems to be controled by binding to diacylglycerol (DAG).

The protein resides in the endoplasmic reticulum membrane. It carries out the reaction K(+)(in) = K(+)(out). Channel activity is activated by increased cytosolic Ca(2+) levels and blocked by luminal high Ca(2+) levels. In terms of biological role, intracellular monovalent cation channel required for maintenance of rapid intracellular calcium release. Acts as a potassium counter-ion channel that functions in synchronization with calcium release from intracellular stores. Activated by increased cytosolic Ca(2+) levels. In Homo sapiens (Human), this protein is Trimeric intracellular cation channel type B.